The sequence spans 1232 residues: DNA-directed RNA polymerase subunit beta (1232 aa).

The disordered stretch occupies residues 1170-1232; that stretch reads SVDEDADELE…LDLDDFGDEH (63 aa). Residues 1171-1180 show a composition bias toward acidic residues; that stretch reads VDEDADELEV. A compositionally biased stretch (basic and acidic residues) spans 1189–1198; the sequence is PEEKEEKEKE. Over residues 1199-1232 the composition is skewed to acidic residues; it reads DSDEYDDLREEDVEPDLEELSLDDLDLDDFGDEH.

Belongs to the RNA polymerase beta chain family. As to quaternary structure, the RNAP catalytic core consists of 2 alpha, 1 beta, 1 beta' and 1 omega subunit. When a sigma factor is associated with the core the holoenzyme is formed, which can initiate transcription.

The enzyme catalyses RNA(n) + a ribonucleoside 5'-triphosphate = RNA(n+1) + diphosphate. DNA-dependent RNA polymerase catalyzes the transcription of DNA into RNA using the four ribonucleoside triphosphates as substrates. The polypeptide is DNA-directed RNA polymerase subunit beta (Clostridium botulinum (strain Kyoto / Type A2)).